Consider the following 379-residue polypeptide: Spermidine/putrescine import ATP-binding protein PotA (379 aa).

An ABC transporter domain is found at 10–240 (VTIDQVSKAY…PATDFVAKFI (231 aa)). 42 to 49 (GPSGCGKT) is an ATP binding site.

The protein belongs to the ABC transporter superfamily. Spermidine/putrescine importer (TC 3.A.1.11.1) family. In terms of assembly, the complex is composed of two ATP-binding proteins (PotA), two transmembrane proteins (PotB and PotC) and a solute-binding protein (PotD).

The protein localises to the cell inner membrane. The catalysed reaction is ATP + H2O + polyamine-[polyamine-binding protein]Side 1 = ADP + phosphate + polyamineSide 2 + [polyamine-binding protein]Side 1.. In terms of biological role, part of the ABC transporter complex PotABCD involved in spermidine/putrescine import. Responsible for energy coupling to the transport system. This chain is Spermidine/putrescine import ATP-binding protein PotA, found in Treponema pallidum (strain Nichols).